The following is a 271-amino-acid chain: Structure-specific endonuclease subunit SLX1 (271 aa).

Residues 9-94 (RFFGVYLLYC…PQASRRLTHV (86 aa)) form the GIY-YIG domain. The SLX1-type zinc finger occupies 182-234 (CTLCARMLQDEEGPLCCPHPGCPLRAHIICLAEEFLQEEPGQLLPLEGHCPSC).

The protein belongs to the SLX1 family. As to quaternary structure, forms a heterodimer with SLX4. A divalent metal cation serves as cofactor.

The protein localises to the nucleus. Functionally, catalytic subunit of the SLX1-SLX4 structure-specific endonuclease that resolves DNA secondary structures generated during DNA repair and recombination. Has endonuclease activity towards branched DNA substrates, introducing single-strand cuts in duplex DNA close to junctions with ss-DNA. Has a preference for 5'-flap structures, and promotes symmetrical cleavage of static and migrating Holliday junctions (HJs). Resolves HJs by generating two pairs of ligatable, nicked duplex products. This chain is Structure-specific endonuclease subunit SLX1 (Slx1b), found in Rattus norvegicus (Rat).